The sequence spans 227 residues: Lipoprotein-releasing system ATP-binding protein LolD (227 aa).

The region spanning 6 to 227 (LKCENINKFY…MQDGLLKEGA (222 aa)) is the ABC transporter domain. 42-49 (GSSGSGKS) provides a ligand contact to ATP.

It belongs to the ABC transporter superfamily. Lipoprotein translocase (TC 3.A.1.125) family. As to quaternary structure, the complex is composed of two ATP-binding proteins (LolD) and two transmembrane proteins (LolC and LolE).

It is found in the cell inner membrane. Part of the ABC transporter complex LolCDE involved in the translocation of mature outer membrane-directed lipoproteins, from the inner membrane to the periplasmic chaperone, LolA. Responsible for the formation of the LolA-lipoprotein complex in an ATP-dependent manner. This Haemophilus influenzae (strain 86-028NP) protein is Lipoprotein-releasing system ATP-binding protein LolD.